The following is a 117-amino-acid chain: Large ribosomal subunit protein bL19 (117 aa).

Belongs to the bacterial ribosomal protein bL19 family.

In terms of biological role, this protein is located at the 30S-50S ribosomal subunit interface and may play a role in the structure and function of the aminoacyl-tRNA binding site. The polypeptide is Large ribosomal subunit protein bL19 (Photorhabdus laumondii subsp. laumondii (strain DSM 15139 / CIP 105565 / TT01) (Photorhabdus luminescens subsp. laumondii)).